Reading from the N-terminus, the 463-residue chain is Argininosuccinate lyase (463 aa).

The protein belongs to the lyase 1 family. Argininosuccinate lyase subfamily.

Its subcellular location is the cytoplasm. The catalysed reaction is 2-(N(omega)-L-arginino)succinate = fumarate + L-arginine. Its pathway is amino-acid biosynthesis; L-arginine biosynthesis; L-arginine from L-ornithine and carbamoyl phosphate: step 3/3. This Thermosynechococcus vestitus (strain NIES-2133 / IAM M-273 / BP-1) protein is Argininosuccinate lyase.